The primary structure comprises 399 residues: Glutathione S-transferase LANCL1 (399 aa).

A2 carries the N-acetylalanine modification. Position 142 is an N6-acetyllysine (K142). A Zn(2+)-binding site is contributed by C276. Position 317 (K317) interacts with glutathione. C322 and H323 together coordinate Zn(2+). 364–367 is a binding site for glutathione; sequence RTPD.

It belongs to the LanC-like protein family. In terms of assembly, interacts with the C-terminal of STOM. Interacts with the EPS8 SH3 domain. Interaction with EPS8 is inhibited by glutathione binding. (Microbial infection) Interacts with P.falciparum SBP1. Detected in erythrocytes, brain, kidney, testis, ovary, heart, lung, placenta and spleen (at protein level). Ubiquitous. Strongly expressed in brain, spinal cord, pituitary gland, kidney, heart, skeletal muscle, pancreas, ovary and testis.

The protein resides in the cytoplasm. The protein localises to the cell membrane. The catalysed reaction is RX + glutathione = an S-substituted glutathione + a halide anion + H(+). It carries out the reaction 1-chloro-2,4-dinitrobenzene + glutathione = 2,4-dinitrophenyl-S-glutathione + chloride + H(+). Functionally, functions as a glutathione transferase. Catalyzes conjugation of the glutathione (GSH) to artificial substrates 1-chloro-2,4-dinitrobenzene (CDNB) and p-nitrophenyl acetate. Mitigates neuronal oxidative stress during normal postnatal development and in response to oxidative stresses probably through GSH antioxidant defense mechanism. May play a role in EPS8 signaling. Binds glutathione. This Homo sapiens (Human) protein is Glutathione S-transferase LANCL1.